Here is a 201-residue protein sequence, read N- to C-terminus: Putative amino-acid transporter Mb0498 (201 aa).

The next 5 membrane-spanning stretches (helical) occupy residues 25–45 (VLVI…AGVG), 57–77 (MTLV…LLAA), 104–124 (LVVT…IGAL), 133–153 (WFFG…LGFS), and 169–189 (ILDA…LVTS).

It belongs to the LysE/ArgO transporter (TC 2.A.75) family.

Its subcellular location is the cell membrane. The chain is Putative amino-acid transporter Mb0498 from Mycobacterium bovis (strain ATCC BAA-935 / AF2122/97).